The sequence spans 357 residues: Arginine kinase (357 aa).

Alanine 2 carries the N-acetylalanine modification. A Phosphagen kinase N-terminal domain is found at 9-91; sequence KLEEGFKKLQ…FDPIIEDYHK (83 aa). 64-68 is a binding site for L-arginine; sequence GVGVY. One can recognise a Phosphagen kinase C-terminal domain in the interval 119 to 356; it reads FVISTRVRCG…LELIKIEKEM (238 aa). Residues 122–126 and histidine 185 each bind ATP; that span reads STRVR. Residue glutamate 225 participates in L-arginine binding. Arginine 229 is an ATP binding site. Cysteine 271 contributes to the L-arginine binding site. Residues 280–284 and 309–314 each bind ATP; these read RASVH and RGTRGE. Residue glutamate 314 participates in L-arginine binding.

The protein belongs to the ATP:guanido phosphotransferase family.

It carries out the reaction L-arginine + ATP = N(omega)-phospho-L-arginine + ADP + H(+). The chain is Arginine kinase from Pachygrapsus marmoratus (Marbled rock crab).